The chain runs to 489 residues: ATP synthase subunit beta 1 (489 aa).

ATP is bound at residue 159-166 (GGAGVGKT). The segment covering 465 to 477 (EKSKKAAEDKPKA) has biased composition (basic and acidic residues). The tract at residues 465–489 (EKSKKAAEDKPKAEEDEDATSLHDA) is disordered.

It belongs to the ATPase alpha/beta chains family. In terms of assembly, F-type ATPases have 2 components, CF(1) - the catalytic core - and CF(0) - the membrane proton channel. CF(1) has five subunits: alpha(3), beta(3), gamma(1), delta(1), epsilon(1). CF(0) has three main subunits: a(1), b(2) and c(9-12). The alpha and beta chains form an alternating ring which encloses part of the gamma chain. CF(1) is attached to CF(0) by a central stalk formed by the gamma and epsilon chains, while a peripheral stalk is formed by the delta and b chains.

The protein resides in the cell inner membrane. It carries out the reaction ATP + H2O + 4 H(+)(in) = ADP + phosphate + 5 H(+)(out). Functionally, produces ATP from ADP in the presence of a proton gradient across the membrane. The catalytic sites are hosted primarily by the beta subunits. This chain is ATP synthase subunit beta 1, found in Marinomonas sp. (strain MWYL1).